The following is a 364-amino-acid chain: Inner membrane ABC transporter permease protein YejB (364 aa).

Residues 1-8 (MGAYLIRR) are Periplasmic-facing. The helical transmembrane segment at 9–29 (LLLVIPTLWAIITINFFIVQI) threads the bilayer. At 30-37 (APGGPVDQ) the chain is on the cytoplasmic side. Residues 38 to 58 (AIAAIEFGNAGVLPGAGGEGV) traverse the membrane as a helical segment. Topologically, residues 59-135 (RASHAQTGVG…LTLIKDSLPV (77 aa)) are periplasmic. In terms of domain architecture, ABC transmembrane type-1 spans 133-348 (LPVSITLGLW…LIGLLLNIVS (216 aa)). The helical transmembrane segment at 136-156 (SITLGLWSTLIIYLVSIPLGI) threads the bilayer. Topologically, residues 157-172 (RKAVYNGSRFDVWSSA) are cytoplasmic. The chain crosses the membrane as a helical span at residues 173 to 193 (FIIIGYAIPAFLFAILLIVFF). Residues 194–224 (AGGSYFDLFPLRGLVSANFDSLPWYQKITDY) are Periplasmic-facing. Residues 225-245 (LWHITLPVLATVIGGFAALTM) traverse the membrane as a helical segment. Topologically, residues 246-284 (LTKNSFLDEVRKQYVVTARAKGVSEKNILWKHVFRNAML) are cytoplasmic. The helical transmembrane segment at 285-305 (LVIAGFPATFISMFFTGSLLI) threads the bilayer. Residues 306 to 326 (EVMFSLNGLGLLGYEATVSRD) are Periplasmic-facing. A helical transmembrane segment spans residues 327-347 (YPVMFGTLYIFTLIGLLLNIV). The Cytoplasmic segment spans residues 348-364 (SDISYTLVDPRIDFEGR).

It belongs to the binding-protein-dependent transport system permease family. OppBC subfamily.

It localises to the cell inner membrane. Functionally, probably part of a binding-protein-dependent transport system. Probably responsible for the translocation of the substrate across the membrane. The polypeptide is Inner membrane ABC transporter permease protein YejB (yejB) (Escherichia coli O157:H7).